A 148-amino-acid chain; its full sequence is IQ domain-containing protein F5 (148 aa).

2 IQ domains span residues 11 to 40 (ERSAAVFIQAWWRGMLVRRTLLHAALRAWI) and 67 to 96 (QEWAAVRLQSWVRMWCVRQRYCRLLNAVRI).

This is IQ domain-containing protein F5 (IQCF5) from Homo sapiens (Human).